Consider the following 42-residue polypeptide: Large ribosomal subunit protein eL32 (42 aa).

The protein belongs to the eukaryotic ribosomal protein eL32 family.

The chain is Large ribosomal subunit protein eL32 (RPL32) from Zea mays (Maize).